Consider the following 319-residue polypeptide: Peroxidase 62 (319 aa).

Residues 1 to 22 (MGLVRSFALVIVFLSCLIAVYG) form the signal peptide. Intrachain disulfides connect Cys-34/Cys-110, Cys-67/Cys-72, Cys-116/Cys-315, and Cys-195/Cys-226. The Proton acceptor role is filled by His-65. Ca(2+) contacts are provided by Asp-66, Val-69, Gly-71, Asp-73, and Ser-75. Residue Pro-157 coordinates substrate. His-188 contacts heme b. Thr-189 contributes to the Ca(2+) binding site. N-linked (GlcNAc...) asparagine glycosylation is present at Asn-204. Residues Asp-239, Ser-242, and Asp-247 each coordinate Ca(2+). The N-linked (GlcNAc...) asparagine glycan is linked to Asn-253.

Belongs to the peroxidase family. Classical plant (class III) peroxidase subfamily. The cofactor is heme b. It depends on Ca(2+) as a cofactor. Mainly expressed in roots.

The protein localises to the secreted. It carries out the reaction 2 a phenolic donor + H2O2 = 2 a phenolic radical donor + 2 H2O. In terms of biological role, removal of H(2)O(2), oxidation of toxic reductants, biosynthesis and degradation of lignin, suberization, auxin catabolism, response to environmental stresses such as wounding, pathogen attack and oxidative stress. These functions might be dependent on each isozyme/isoform in each plant tissue. This chain is Peroxidase 62 (PER62), found in Arabidopsis thaliana (Mouse-ear cress).